The chain runs to 332 residues: Autoinducer 2 import system permease protein LsrD (332 aa).

The next 10 membrane-spanning stretches (helical) occupy residues 7 to 27 (YSWE…FGLI), 45 to 65 (ICIG…GMDI), 70 to 90 (TIGL…PLPL), 91 to 111 (AIII…GLII), 118 to 138 (LVIT…LSGM), 162 to 182 (FLGI…FWLL), 216 to 236 (VYAM…SYFG), 240 to 260 (SDLG…GGAN), 261 to 281 (IYGG…VGFL), and 288 to 308 (AGVP…VVVV).

This sequence belongs to the binding-protein-dependent transport system permease family. AraH/RbsC subfamily. The complex is composed of two ATP-binding proteins (LsrA), two transmembrane proteins (LsrC and LsrD) and a solute-binding protein (LsrB).

Its subcellular location is the cell inner membrane. In terms of biological role, part of the ABC transporter complex LsrABCD involved in autoinducer 2 (AI-2) import. Probably responsible for the translocation of the substrate across the membrane. This chain is Autoinducer 2 import system permease protein LsrD (lsrD), found in Salmonella paratyphi B (strain ATCC BAA-1250 / SPB7).